A 231-amino-acid polypeptide reads, in one-letter code: MMTTLTARPEAITFDPQQSALIVVDMQNAYATPGGYLDLAGFDVSTTRPVIANIQTAVTAARAAGMLIIWFQNGWDEQYVEAGGPGSPNFHKSNALKTMRKQPQLQGKLLAKGSWDYQLVDELVPQPGDIVLPKPRYSGFFNTPLDSILRSRGIRHLVFTGIATNVCVESTLRDGFFLEYFGVVLEDATHQAGPEFAQKAALFNIETFFGWVSDVETFCDALSPTSFARIA.

Asp-25 serves as the catalytic Proton acceptor. Lys-134 is an active-site residue. Cys-167 acts as the Nucleophile in catalysis.

Belongs to the isochorismatase family. RutB subfamily.

It catalyses the reaction (Z)-3-ureidoacrylate + H2O + H(+) = (Z)-3-aminoacrylate + NH4(+) + CO2. The catalysed reaction is (Z)-3-ureidoacrylate + H2O = (Z)-3-aminoacrylate + carbamate + H(+). It carries out the reaction (Z)-2-methylureidoacrylate + H2O + H(+) = (Z)-2-methylaminoacrylate + NH4(+) + CO2. Its function is as follows. Hydrolyzes ureidoacrylate to form aminoacrylate and carbamate. The carbamate hydrolyzes spontaneously, thereby releasing one of the nitrogen atoms of the pyrimidine ring as ammonia and one of its carbon atoms as CO2. This Escherichia coli O9:H4 (strain HS) protein is Ureidoacrylate amidohydrolase RutB.